A 376-amino-acid chain; its full sequence is UDP-N-acetylglucosamine--N-acetylmuramyl-(pentapeptide) pyrophosphoryl-undecaprenol N-acetylglucosamine transferase (376 aa).

Residues 11 to 13 (TGG), Asn-117, Arg-160, Ser-208, and Gln-310 contribute to the UDP-N-acetyl-alpha-D-glucosamine site.

This sequence belongs to the glycosyltransferase 28 family. MurG subfamily.

It is found in the cell inner membrane. It catalyses the reaction di-trans,octa-cis-undecaprenyl diphospho-N-acetyl-alpha-D-muramoyl-L-alanyl-D-glutamyl-meso-2,6-diaminopimeloyl-D-alanyl-D-alanine + UDP-N-acetyl-alpha-D-glucosamine = di-trans,octa-cis-undecaprenyl diphospho-[N-acetyl-alpha-D-glucosaminyl-(1-&gt;4)]-N-acetyl-alpha-D-muramoyl-L-alanyl-D-glutamyl-meso-2,6-diaminopimeloyl-D-alanyl-D-alanine + UDP + H(+). Its pathway is cell wall biogenesis; peptidoglycan biosynthesis. Cell wall formation. Catalyzes the transfer of a GlcNAc subunit on undecaprenyl-pyrophosphoryl-MurNAc-pentapeptide (lipid intermediate I) to form undecaprenyl-pyrophosphoryl-MurNAc-(pentapeptide)GlcNAc (lipid intermediate II). The sequence is that of UDP-N-acetylglucosamine--N-acetylmuramyl-(pentapeptide) pyrophosphoryl-undecaprenol N-acetylglucosamine transferase from Rickettsia rickettsii (strain Iowa).